We begin with the raw amino-acid sequence, 408 residues long: Protein BTN1 (408 aa).

Positions 1-30 (MSDKSHQIYCYFWLFGLINNVLYVVILSAA) are cleaved as a signal peptide. A run of 7 helical transmembrane segments spans residues 42–62 (LVLL…PFFI), 80–100 (LGMF…ISFA), 128–148 (SGTG…TSIF), 150–170 (VPVK…LFYF), 238–258 (TVYL…LFPI), 323–343 (WFYV…EGFL), and 369–389 (GAVS…GLGL).

The protein belongs to the battenin family.

The protein localises to the vacuole membrane. Plays a role in vacuolar arginine transport. Involved in pH homeostasis. May be involved in ion homeostasis together with IST2. Not necessary for mitochondrial function or ATP synthase degradation. The polypeptide is Protein BTN1 (YHC3) (Saccharomyces cerevisiae (strain ATCC 204508 / S288c) (Baker's yeast)).